An 854-amino-acid chain; its full sequence is DNA gyrase subunit A (854 aa).

One can recognise a Topo IIA-type catalytic domain in the interval 42-510; sequence LPEVRDGLKP…ADGQVSDEDL (469 aa). Catalysis depends on Tyr129, which acts as the O-(5'-phospho-DNA)-tyrosine intermediate. The GyrA-box signature appears at 537–543; it reads QKRGGKG.

It belongs to the type II topoisomerase GyrA/ParC subunit family. In terms of assembly, heterotetramer, composed of two GyrA and two GyrB chains. In the heterotetramer, GyrA contains the active site tyrosine that forms a transient covalent intermediate with DNA, while GyrB binds cofactors and catalyzes ATP hydrolysis.

The protein resides in the cytoplasm. The catalysed reaction is ATP-dependent breakage, passage and rejoining of double-stranded DNA.. DNA supercoiling is inhibited by the coumarin antibiotic novobiocin. Also inhibited by the fluoroquinolones ciprofloxacin and moxifloxacin. In terms of biological role, a type II topoisomerase that negatively supercoils closed circular double-stranded (ds) DNA in an ATP-dependent manner to modulate DNA topology and maintain chromosomes in an underwound state; also catalyzes the interconversion of other topological isomers of double-stranded DNA rings, including catenanes. At comparable concentrations has a stronger decatenation activity than E.coli, which is inhibited by ciprofloxacin and novobiocin. Cleaves dsDNA at the sequence 5'-AT/GGCC-3', leaving a 4 base overhang. Relaxes negatively supercoiled DNA in an ATP-independent manner. Its function is as follows. Negative supercoiling favors strand separation, and DNA replication, transcription, recombination and repair, all of which involve strand separation. Type II topoisomerases break and join 2 DNA strands simultaneously in an ATP-dependent manner. The chain is DNA gyrase subunit A from Mycolicibacterium smegmatis (Mycobacterium smegmatis).